Consider the following 329-residue polypeptide: Biotin synthase (329 aa).

Residues 38–262 enclose the Radical SAM core domain; the sequence is NTIQVSTLLS…IMPYSYIRLS (225 aa). C53, C57, and C60 together coordinate [4Fe-4S] cluster. [2Fe-2S] cluster-binding residues include C97, C128, C188, and R260.

The protein belongs to the radical SAM superfamily. Biotin synthase family. Homodimer. It depends on [4Fe-4S] cluster as a cofactor. Requires [2Fe-2S] cluster as cofactor.

It catalyses the reaction (4R,5S)-dethiobiotin + (sulfur carrier)-SH + 2 reduced [2Fe-2S]-[ferredoxin] + 2 S-adenosyl-L-methionine = (sulfur carrier)-H + biotin + 2 5'-deoxyadenosine + 2 L-methionine + 2 oxidized [2Fe-2S]-[ferredoxin]. The protein operates within cofactor biosynthesis; biotin biosynthesis; biotin from 7,8-diaminononanoate: step 2/2. Catalyzes the conversion of dethiobiotin (DTB) to biotin by the insertion of a sulfur atom into dethiobiotin via a radical-based mechanism. This is Biotin synthase from Acinetobacter baylyi (strain ATCC 33305 / BD413 / ADP1).